Here is a 48-residue protein sequence, read N- to C-terminus: ATP synthase protein 8 (48 aa).

Residues 13 to 32 traverse the membrane as a helical segment; the sequence is VVFTLISLSFIFFVFSKYIL.

Belongs to the ATPase protein 8 family. F-type ATPases have 2 components, CF(1) - the catalytic core - and CF(0) - the membrane proton channel.

It localises to the mitochondrion membrane. Its function is as follows. Mitochondrial membrane ATP synthase (F(1)F(0) ATP synthase or Complex V) produces ATP from ADP in the presence of a proton gradient across the membrane which is generated by electron transport complexes of the respiratory chain. F-type ATPases consist of two structural domains, F(1) - containing the extramembraneous catalytic core and F(0) - containing the membrane proton channel, linked together by a central stalk and a peripheral stalk. During catalysis, ATP synthesis in the catalytic domain of F(1) is coupled via a rotary mechanism of the central stalk subunits to proton translocation. Part of the complex F(0) domain. Minor subunit located with subunit a in the membrane. In Trichophyton rubrum (Athlete's foot fungus), this protein is ATP synthase protein 8 (ATP8).